A 128-amino-acid polypeptide reads, in one-letter code: Fluoride-specific ion channel FluC (128 aa).

Transmembrane regions (helical) follow at residues leucine 7–valine 27, phenylalanine 37–isoleucine 57, threonine 73–phenylalanine 93, and alanine 96–alanine 116. Na(+) contacts are provided by glycine 77 and threonine 80.

The protein belongs to the fluoride channel Fluc/FEX (TC 1.A.43) family.

It localises to the cell inner membrane. The catalysed reaction is fluoride(in) = fluoride(out). Na(+) is not transported, but it plays an essential structural role and its presence is essential for fluoride channel function. Its function is as follows. Fluoride-specific ion channel. Important for reducing fluoride concentration in the cell, thus reducing its toxicity. The polypeptide is Fluoride-specific ion channel FluC (Nautilia profundicola (strain ATCC BAA-1463 / DSM 18972 / AmH)).